The primary structure comprises 356 residues: Tyrosine recombinase XerS (356 aa).

Residues 16–121 (TMPWYILEYY…ALSSLYKYLT (106 aa)) enclose the Core-binding (CB) domain. A Tyr recombinase domain is found at 169-354 (EFLQYIDTEY…VNDEQKNALD (186 aa)). Catalysis depends on residues R210, K234, H306, R309, and H332. Y341 acts as the O-(3'-phospho-DNA)-tyrosine intermediate in catalysis.

This sequence belongs to the 'phage' integrase family. XerS subfamily.

It localises to the cytoplasm. With respect to regulation, ftsK is required for recombination. Its function is as follows. Site-specific tyrosine recombinase, which acts by catalyzing the cutting and rejoining of the recombining DNA molecules. Essential to convert dimers of the bacterial chromosome into monomers to permit their segregation at cell division. The sequence is that of Tyrosine recombinase XerS from Streptococcus sanguinis (strain SK36).